An 83-amino-acid chain; its full sequence is Cytochrome b559 subunit alpha (83 aa).

The chain crosses the membrane as a helical span at residues 21–35 (VIHSITIPSLFIAGW). Histidine 23 lines the heme pocket.

This sequence belongs to the PsbE/PsbF family. Heterodimer of an alpha subunit and a beta subunit. PSII is composed of 1 copy each of membrane proteins PsbA, PsbB, PsbC, PsbD, PsbE, PsbF, PsbH, PsbI, PsbJ, PsbK, PsbL, PsbM, PsbT, PsbX, PsbY, PsbZ, Psb30/Ycf12, at least 3 peripheral proteins of the oxygen-evolving complex and a large number of cofactors. It forms dimeric complexes. Heme b is required as a cofactor.

It is found in the plastid membrane. Its function is as follows. This b-type cytochrome is tightly associated with the reaction center of photosystem II (PSII). PSII is a light-driven water:plastoquinone oxidoreductase that uses light energy to abstract electrons from H(2)O, generating O(2) and a proton gradient subsequently used for ATP formation. It consists of a core antenna complex that captures photons, and an electron transfer chain that converts photonic excitation into a charge separation. This Cuscuta reflexa (Southern Asian dodder) protein is Cytochrome b559 subunit alpha.